We begin with the raw amino-acid sequence, 57 residues long: Small ribosomal subunit protein bS21 (57 aa).

The segment at 35 to 57 (REHYEKPSVKRKKKAEAARKKKF) is disordered. The span at 43–57 (VKRKKKAEAARKKKF) shows a compositional bias: basic residues.

This sequence belongs to the bacterial ribosomal protein bS21 family.

In Alkaliphilus metalliredigens (strain QYMF), this protein is Small ribosomal subunit protein bS21.